The chain runs to 1221 residues: RNA exonuclease 1 homolog (1221 aa).

The segment covering Arg-37–Gly-46 has biased composition (gly residues). Positions Arg-37–Leu-75 are disordered. Residues Leu-86–Thr-115 adopt a coiled-coil conformation. The tract at residues Thr-116 to Asp-598 is disordered. Residue Arg-191 is modified to Omega-N-methylarginine. Phosphoserine occurs at positions 287, 289, and 358. A compositionally biased stretch (low complexity) spans Ala-357–Gly-369. The segment covering Ala-393–Gly-417 has biased composition (basic and acidic residues). Phosphoserine occurs at positions 459, 499, and 526. Basic and acidic residues predominate over residues Leu-492 to Asp-501. Residues Arg-498–Ser-577 form an interaction with ELOA region. Over residues Pro-580 to Ala-593 the composition is skewed to low complexity. Position 610 is a phosphoserine (Ser-610). Disordered regions lie at residues Ile-619–Glu-692 and His-735–Leu-775. A compositionally biased stretch (basic and acidic residues) spans Lys-627–Gly-648. Phosphoserine is present on Ser-914. One can recognise an Exonuclease domain in the interval Ile-1060–Val-1209.

This sequence belongs to the REXO1/REXO3 family. In terms of assembly, interacts with TCEA2 and ELOA. Ubiquitously expressed.

The protein localises to the nucleus. In terms of biological role, seems to have no detectable effect on transcription elongation in vitro. In Homo sapiens (Human), this protein is RNA exonuclease 1 homolog (REXO1).